A 403-amino-acid polypeptide reads, in one-letter code: Interferon-induced protein with tetratricopeptide repeats 3 (403 aa).

4 TPR repeats span residues 94–127, 136–169, 172–206, and 241–274; these read LVTW…CQKF, PELE…KPKD, CSSG…NPQN, and TDVL…TVNN.

This sequence belongs to the IFIT family. As to quaternary structure, component of an interferon-dependent multiprotein complex, at least composed of IFIT1, IFIT2 and IFIT3. Interacts with IFIT1 and IFIT2. Interacts (via N-terminus) with MAVS, TBK1, TRAF6 and RIGI. Interacts with COPS5.

Its subcellular location is the cytoplasm. The protein resides in the mitochondrion. In terms of biological role, IFN-induced antiviral protein which acts as an inhibitor of cellular as well as viral processes, cell migration, proliferation, signaling, and viral replication. Enhances MAVS-mediated host antiviral responses by serving as an adapter bridging TBK1 to MAVS which leads to the activation of TBK1 and phosphorylation of IRF3 and phosphorylated IRF3 translocates into nucleus to promote antiviral gene transcription. Exhibits an antiproliferative activity via the up-regulation of cell cycle negative regulators CDKN1A/p21 and CDKN1B/p27. Normally, CDKN1B/p27 turnover is regulated by COPS5, which binds CDKN1B/p27 in the nucleus and exports it to the cytoplasm for ubiquitin-dependent degradation. IFIT3 sequesters COPS5 in the cytoplasm, thereby increasing nuclear CDKN1B/p27 protein levels. Up-regulates CDKN1A/p21 by down-regulating MYC, a repressor of CDKN1A/p21. Can negatively regulate the apoptotic effects of IFIT2. In Mus musculus (Mouse), this protein is Interferon-induced protein with tetratricopeptide repeats 3 (Ifit3).